Here is a 213-residue protein sequence, read N- to C-terminus: Large ribosomal subunit protein uL1 (213 aa).

It belongs to the universal ribosomal protein uL1 family. In terms of assembly, part of the 50S ribosomal subunit.

Functionally, binds directly to 23S rRNA. Probably involved in E site tRNA release. In terms of biological role, protein L1 is also a translational repressor protein, it controls the translation of its operon by binding to its mRNA. The protein is Large ribosomal subunit protein uL1 of Nanoarchaeum equitans (strain Kin4-M).